Consider the following 570-residue polypeptide: PTS system lactose-specific EIICB component (570 aa).

The region spanning 9–410 (IEKGKPFFEK…VVDIIIYYPF (402 aa)) is the PTS EIIC type-3 domain. Helical transmembrane passes span 31–51 (GFIS…IAYV), 65–85 (AILM…VAGT), 104–124 (INFI…ASDP), 133–153 (AFMG…TVIV), 178–198 (FKDL…DLVI), 223–243 (GWIG…VGIH), 283–303 (MFIV…MFMW), 340–360 (VFFI…KLFV), and 382–402 (IIMG…LIVV). The PTS EIIB type-3 domain maps to 467–570 (QTNVLVLCAG…LDFVQQQFEN (104 aa)). The Phosphocysteine intermediate; for EIIB activity role is filled by cysteine 474. The residue at position 474 (cysteine 474) is a Phosphocysteine; by EIIA.

The protein resides in the cell membrane. The enzyme catalyses lactose(out) + N(pros)-phospho-L-histidyl-[protein] = lactose 6-phosphate(in) + L-histidyl-[protein]. The phosphoenolpyruvate-dependent sugar phosphotransferase system (sugar PTS), a major carbohydrate active transport system, catalyzes the phosphorylation of incoming sugar substrates concomitantly with their translocation across the cell membrane. The enzyme II LacEF PTS system is involved in lactose transport, but can also use galactose, isopropyl beta-thio-galactopyranoside and thiomethyl beta-D-galactopyranoside (TMG) as substrates. This Staphylococcus aureus protein is PTS system lactose-specific EIICB component.